A 316-amino-acid polypeptide reads, in one-letter code: Pantothenate kinase (316 aa).

95–102 (GSVAVGKS) is a binding site for ATP.

Belongs to the prokaryotic pantothenate kinase family.

The protein resides in the cytoplasm. It carries out the reaction (R)-pantothenate + ATP = (R)-4'-phosphopantothenate + ADP + H(+). It participates in cofactor biosynthesis; coenzyme A biosynthesis; CoA from (R)-pantothenate: step 1/5. This is Pantothenate kinase from Salmonella agona (strain SL483).